A 117-amino-acid chain; its full sequence is Ribonuclease P protein component (117 aa).

Belongs to the RnpA family. As to quaternary structure, consists of a catalytic RNA component (M1 or rnpB) and a protein subunit.

The catalysed reaction is Endonucleolytic cleavage of RNA, removing 5'-extranucleotides from tRNA precursor.. RNaseP catalyzes the removal of the 5'-leader sequence from pre-tRNA to produce the mature 5'-terminus. It can also cleave other RNA substrates such as 4.5S RNA. The protein component plays an auxiliary but essential role in vivo by binding to the 5'-leader sequence and broadening the substrate specificity of the ribozyme. In Desulforapulum autotrophicum (strain ATCC 43914 / DSM 3382 / VKM B-1955 / HRM2) (Desulfobacterium autotrophicum), this protein is Ribonuclease P protein component.